Here is a 129-residue protein sequence, read N- to C-terminus: Large ribosomal subunit protein bL17 (129 aa).

This sequence belongs to the bacterial ribosomal protein bL17 family. Part of the 50S ribosomal subunit. Contacts protein L32.

The chain is Large ribosomal subunit protein bL17 from Yersinia pseudotuberculosis serotype O:1b (strain IP 31758).